A 102-amino-acid chain; its full sequence is Complement inhibitor RaCI6 (102 aa).

A signal peptide spans 1 to 24 (MAALNGLVLLLLTISAMFISECYS). 2 disulfide bridges follow: Cys37–Cys61 and Cys42–Cys63.

Belongs to the RaCI family. As to expression, expressed in salivary glands.

It localises to the secreted. Functionally, complement inhibitor. Prevents complement-mediated C5 activation by binding to C5. Binds C5 at a different binding site than the other tick complement inhibitors OmCI and CirpT1, and the drug eculizumab. This is Complement inhibitor RaCI6 from Dermacentor andersoni (Rocky mountain wood tick).